The chain runs to 199 residues: Superoxide dismutase [Mn/Fe] 2 (199 aa).

Residues His-27, His-81, Asp-161, and His-165 each contribute to the Fe(3+) site. Positions 27, 81, 161, and 165 each coordinate Mn(2+).

It belongs to the iron/manganese superoxide dismutase family. Homodimer. Can also form a heterodimer with SodA. Requires Mn(2+) as cofactor. Fe(3+) is required as a cofactor.

The enzyme catalyses 2 superoxide + 2 H(+) = H2O2 + O2. Functionally, destroys superoxide anion radicals which are normally produced within the cells and which are toxic to biological systems. Catalyzes the dismutation of superoxide anion radicals into O2 and H2O2 by successive reduction and oxidation of the transition metal ion at the active site. In Staphylococcus aureus (strain USA300), this protein is Superoxide dismutase [Mn/Fe] 2 (sodM).